The chain runs to 142 residues: Hemoglobin subunit alpha (142 aa).

Positions 2-142 (VLSAADKTNV…VSTVLTSKYR (141 aa)) constitute a Globin domain. A Phosphoserine modification is found at S4. K8 carries the N6-succinyllysine modification. A Phosphothreonine modification is found at T9. K12 is modified (N6-succinyllysine). Residue K17 is modified to N6-acetyllysine; alternate. The residue at position 17 (K17) is an N6-succinyllysine; alternate. K41 carries the N6-succinyllysine modification. Position 50 is a phosphoserine (S50). H59 is a binding site for O2. Heme b is bound at residue H88. S103 is subject to Phosphoserine. Position 109 is a phosphothreonine (T109). Phosphoserine is present on residues S125 and S132. A phosphothreonine mark is found at T135 and T138. S139 is subject to Phosphoserine.

The protein belongs to the globin family. As to quaternary structure, heterotetramer of two alpha chains and two beta chains. As to expression, red blood cells.

Its function is as follows. Involved in oxygen transport from the lung to the various peripheral tissues. Functionally, hemopressin acts as an antagonist peptide of the cannabinoid receptor CNR1. Hemopressin-binding efficiently blocks cannabinoid receptor CNR1 and subsequent signaling. The chain is Hemoglobin subunit alpha (HBA) from Equus przewalskii (Przewalski's horse).